The chain runs to 227 residues: Cytochrome c oxidase subunit 2 (227 aa).

Over 1–22 (MAYPFQLGLQDATSPIMEELMN) the chain is Mitochondrial intermembrane. A helical transmembrane segment spans residues 23–44 (FHDHTLMIVFLISSLVLYIISL). Residues 45–60 (MLTTKLTHTSTMDAQE) lie on the Mitochondrial matrix side of the membrane. Residues 61 to 81 (VETIWTILPAVILIMIALPSL) traverse the membrane as a helical segment. At 82–227 (RILYMMDEIN…YFENWSASMI (146 aa)) the chain is on the mitochondrial intermembrane side. Residues His161, Cys196, Glu198, Cys200, His204, and Met207 each coordinate Cu cation. A Mg(2+)-binding site is contributed by Glu198. Tyr218 carries the phosphotyrosine modification.

This sequence belongs to the cytochrome c oxidase subunit 2 family. Component of the cytochrome c oxidase (complex IV, CIV), a multisubunit enzyme composed of 14 subunits. The complex is composed of a catalytic core of 3 subunits MT-CO1, MT-CO2 and MT-CO3, encoded in the mitochondrial DNA, and 11 supernumerary subunits COX4I, COX5A, COX5B, COX6A, COX6B, COX6C, COX7A, COX7B, COX7C, COX8 and NDUFA4, which are encoded in the nuclear genome. The complex exists as a monomer or a dimer and forms supercomplexes (SCs) in the inner mitochondrial membrane with NADH-ubiquinone oxidoreductase (complex I, CI) and ubiquinol-cytochrome c oxidoreductase (cytochrome b-c1 complex, complex III, CIII), resulting in different assemblies (supercomplex SCI(1)III(2)IV(1) and megacomplex MCI(2)III(2)IV(2)). Found in a complex with TMEM177, COA6, COX18, COX20, SCO1 and SCO2. Interacts with TMEM177 in a COX20-dependent manner. Interacts with COX20. Interacts with COX16. The cofactor is Cu cation.

It localises to the mitochondrion inner membrane. It carries out the reaction 4 Fe(II)-[cytochrome c] + O2 + 8 H(+)(in) = 4 Fe(III)-[cytochrome c] + 2 H2O + 4 H(+)(out). Functionally, component of the cytochrome c oxidase, the last enzyme in the mitochondrial electron transport chain which drives oxidative phosphorylation. The respiratory chain contains 3 multisubunit complexes succinate dehydrogenase (complex II, CII), ubiquinol-cytochrome c oxidoreductase (cytochrome b-c1 complex, complex III, CIII) and cytochrome c oxidase (complex IV, CIV), that cooperate to transfer electrons derived from NADH and succinate to molecular oxygen, creating an electrochemical gradient over the inner membrane that drives transmembrane transport and the ATP synthase. Cytochrome c oxidase is the component of the respiratory chain that catalyzes the reduction of oxygen to water. Electrons originating from reduced cytochrome c in the intermembrane space (IMS) are transferred via the dinuclear copper A center (CU(A)) of subunit 2 and heme A of subunit 1 to the active site in subunit 1, a binuclear center (BNC) formed by heme A3 and copper B (CU(B)). The BNC reduces molecular oxygen to 2 water molecules using 4 electrons from cytochrome c in the IMS and 4 protons from the mitochondrial matrix. The polypeptide is Cytochrome c oxidase subunit 2 (Mtco2) (Mus musculus (Mouse)).